Reading from the N-terminus, the 595-residue chain is Myb-like protein D (595 aa).

4 disordered regions span residues 1–47 (MQQQ…NGLV), 55–74 (QQYQ…DEGE), 82–266 (DESQ…NNRK), and 319–445 (VLQK…IWTQ). The segment covering 19-47 (DNYNNNNSNINTNNNNSINDYENQNNGLV) has biased composition (low complexity). Residues 60–74 (DQNDSFDDDSMDEGE) are compositionally biased toward acidic residues. Composition is skewed to low complexity over residues 90-212 (NNNN…ENNN) and 225-264 (NNNN…NNNN). Residues 324 to 348 (TLNRNRSRSRSRSNSRSHSRSRSRS) show a composition bias toward basic residues. 2 stretches are compositionally biased toward low complexity: residues 349 to 368 (RSLS…YSRS) and 376 to 420 (NNNN…NNNN). Over residues 423–434 (RKSEDDNQDDGK) the composition is skewed to basic and acidic residues. The HTH myb-type domain maps to 435-489 (KKHRKNAIWTQEEDEKMAQLYNKYGKSWKAIHSHFDDKTREQVQSHGQYLIRIGK). Residues 462–485 (WKAIHSHFDDKTREQVQSHGQYLI) constitute a DNA-binding region (H-T-H motif). The disordered stretch occupies residues 494–595 (HRDGRKERRK…NSSNYVNNDN (102 aa)). Residues 517 to 595 (QQNQQNNNNN…NSSNYVNNDN (79 aa)) are compositionally biased toward low complexity.

It is found in the nucleus. The chain is Myb-like protein D (mybD) from Dictyostelium discoideum (Social amoeba).